Reading from the N-terminus, the 85-residue chain is MKVTLIVILTCAAVLVLHTTAAEELEAESQLMEVGMPDTELAAVDEERLFECSVSCEIEKEGNKDCKKKKCKGGWKCKFNMCVKV.

The N-terminal stretch at 1-22 (MKVTLIVILTCAAVLVLHTTAA) is a signal peptide. Positions 23-48 (EELEAESQLMEVGMPDTELAAVDEER) are excised as a propeptide. Disulfide bonds link Cys-52–Cys-66, Cys-56–Cys-77, and Cys-71–Cys-82.

This sequence belongs to the neurotoxin 12 (Hwtx-2) family. 02 (Hwtx-2) subfamily. As to quaternary structure, monomer. In terms of tissue distribution, expressed by the venom gland.

It is found in the secreted. In terms of biological role, neurotoxin active on both insects and mammals. This is U4-theraphotoxin-Hhn1a from Cyriopagopus hainanus (Chinese bird spider).